The sequence spans 418 residues: UDP-N-acetylglucosamine 1-carboxyvinyltransferase (418 aa).

22-23 (KN) contacts phosphoenolpyruvate. UDP-N-acetyl-alpha-D-glucosamine is bound at residue arginine 92. The active-site Proton donor is the cysteine 116. Cysteine 116 bears the 2-(S-cysteinyl)pyruvic acid O-phosphothioketal mark. Residues aspartate 305 and isoleucine 327 each contribute to the UDP-N-acetyl-alpha-D-glucosamine site.

It belongs to the EPSP synthase family. MurA subfamily.

It localises to the cytoplasm. It carries out the reaction phosphoenolpyruvate + UDP-N-acetyl-alpha-D-glucosamine = UDP-N-acetyl-3-O-(1-carboxyvinyl)-alpha-D-glucosamine + phosphate. Its pathway is cell wall biogenesis; peptidoglycan biosynthesis. In terms of biological role, cell wall formation. Adds enolpyruvyl to UDP-N-acetylglucosamine. This is UDP-N-acetylglucosamine 1-carboxyvinyltransferase from Gluconobacter oxydans (strain 621H) (Gluconobacter suboxydans).